Reading from the N-terminus, the 36-residue chain is Photosystem I reaction center subunit VIII (36 aa).

A helical membrane pass occupies residues 9-29 (ILVPLVGLIFPAIAMTSLFIY).

The protein belongs to the PsaI family.

The protein resides in the plastid. It localises to the chloroplast thylakoid membrane. Functionally, may help in the organization of the PsaL subunit. The polypeptide is Photosystem I reaction center subunit VIII (Tupiella akineta (Green alga)).